We begin with the raw amino-acid sequence, 467 residues long: Phytase A (467 aa).

The signal sequence occupies residues 1–23 (MGVSAVLLPLYLLAGVTSGLAVP). The N-linked (GlcNAc...) asparagine glycan is linked to Asn27. Cysteines 31 and 40 form a disulfide. Residues Gln50 and Tyr51 each coordinate 1D-myo-inositol hexakisphosphate. Asn59 is a glycosylation site (N-linked (GlcNAc...) asparagine). 4 disulfides stabilise this stretch: Cys71–Cys414, Cys215–Cys465, Cys264–Cys282, and Cys436–Cys444. Residues Arg81, His82, Arg85, and Thr88 each coordinate 1D-myo-inositol hexakisphosphate. His82 functions as the Nucleophile in the catalytic mechanism. N-linked (GlcNAc...) asparagine glycosylation is found at Asn105 and Asn120. Arg165 serves as a coordination point for 1D-myo-inositol hexakisphosphate. Residues Asn207 and Asn230 are each glycosylated (N-linked (GlcNAc...) asparagine). Lys301 contributes to the 1D-myo-inositol hexakisphosphate binding site. Residues Asn339 and Asn352 are each glycosylated (N-linked (GlcNAc...) asparagine). 2 residues coordinate 1D-myo-inositol hexakisphosphate: His361 and Asp362. Residues Asn376 and Asn388 are each glycosylated (N-linked (GlcNAc...) asparagine).

This sequence belongs to the histidine acid phosphatase family. As to quaternary structure, monomer.

The protein localises to the secreted. It catalyses the reaction 1D-myo-inositol hexakisphosphate + H2O = 1D-myo-inositol 1,2,4,5,6-pentakisphosphate + phosphate. The enzyme catalyses 1D-myo-inositol 1,2,4,5,6-pentakisphosphate + H2O = 1D-myo-inositol 1,2,5,6-tetrakisphosphate + phosphate. It carries out the reaction 1D-myo-inositol 1,2,5,6-tetrakisphosphate + H2O = 1D-myo-inositol 1,2,6-trisphosphate + phosphate. The catalysed reaction is 1D-myo-inositol 1,2,6-trisphosphate + H2O = 1D-myo-inositol 1,2-bisphosphate + phosphate. It catalyses the reaction 1D-myo-inositol 1,2-bisphosphate + H2O = 1D-myo-inositol 2-phosphate + phosphate. In terms of biological role, catalyzes the phosphate monoester hydrolysis of phytic acid (myo-inositol hexakisphosphate), which results in the stepwise formation of myo-inositol pentakis-, tetrakis-, tris-, bis-, and monophosphates, as well as the liberation of inorganic phosphate. Myo-inositol 2-monophosphate is the end product. The sequence is that of Phytase A (phyA) from Aspergillus awamori (Black koji mold).